The chain runs to 157 residues: Protein FAM218A (157 aa).

The disordered stretch occupies residues 104–127; that stretch reads PAVTPPKLPGHSKSEGPPGKVRKR.

This Homo sapiens (Human) protein is Protein FAM218A (FAM218A).